The sequence spans 429 residues: MDTIFALASAPGKSGVAVLRISGSRAFHAGRVLAGGLPDAQRTSLRKLRDSDGSVIDEALVLAFESPNSFTGEDCVEFQTHGSPAIIAALMNELSALPGLRLAQPGEFTRRALENNRMDLAQVEGLADLIEAETEAQRKQALRTFSGELGQKVELWRKDLVRAMALLEVTIDFADEEVPEDVYPEVQELLGRVSQNLAAESAGTHAAERIRHGFEVAILGAPNVGKSSLLNRLAGREAAITSSIAGTTRDVVEVRLDLDGLPVTVLDTAGLRETQDEIEQIGISRAMARAESADLRIILIEDGRLPSGLGVADDDILVQAKSDILPSSSEFAISSVTGRGIDRLVKAVSHRLSLRAASAGTATHVRHRLAISSAVESLDLAKTKISEGFPVELVIEDLRQALVDLESLIGRVGVEQVLDEIFANFCLGK.

The (6S)-5-formyl-5,6,7,8-tetrahydrofolate site is built by R20, E77, and R117. The TrmE-type G domain maps to 213–353 (GFEVAILGAP…LVKAVSHRLS (141 aa)). A K(+)-binding site is contributed by N223. GTP contacts are provided by residues 223–228 (NVGKSS), 242–248 (SSIAGTT), and 267–270 (DTAG). S227 serves as a coordination point for Mg(2+). The K(+) site is built by S242, I244, and T247. T248 is a binding site for Mg(2+). Residue K429 participates in (6S)-5-formyl-5,6,7,8-tetrahydrofolate binding.

This sequence belongs to the TRAFAC class TrmE-Era-EngA-EngB-Septin-like GTPase superfamily. TrmE GTPase family. In terms of assembly, homodimer. Heterotetramer of two MnmE and two MnmG subunits. K(+) is required as a cofactor.

It localises to the cytoplasm. Exhibits a very high intrinsic GTPase hydrolysis rate. Involved in the addition of a carboxymethylaminomethyl (cmnm) group at the wobble position (U34) of certain tRNAs, forming tRNA-cmnm(5)s(2)U34. This chain is tRNA modification GTPase MnmE, found in Dinoroseobacter shibae (strain DSM 16493 / NCIMB 14021 / DFL 12).